A 637-amino-acid chain; its full sequence is tRNA uridine 5-carboxymethylaminomethyl modification enzyme MnmG (637 aa).

FAD is bound by residues 15-20 (GAGHAG), isoleucine 127, and serine 182. An NAD(+)-binding site is contributed by 276–290 (GPRYCPSIEDKIVRF). Position 373 (glutamine 373) interacts with FAD.

Belongs to the MnmG family. As to quaternary structure, homodimer. Heterotetramer of two MnmE and two MnmG subunits. FAD is required as a cofactor.

The protein resides in the cytoplasm. NAD-binding protein involved in the addition of a carboxymethylaminomethyl (cmnm) group at the wobble position (U34) of certain tRNAs, forming tRNA-cmnm(5)s(2)U34. The sequence is that of tRNA uridine 5-carboxymethylaminomethyl modification enzyme MnmG from Streptococcus pneumoniae (strain Hungary19A-6).